The sequence spans 427 residues: ATP-sensitive inward rectifier potassium channel 12 (427 aa).

Topologically, residues 1-77 (MTASGRTNPY…LADMFTTCVD (77 aa)) are cytoplasmic. An S-nitrosocysteine modification is found at C75. Residues 78–104 (IRWRYMLLIFSLAFLASWLLFGVIFWV) traverse the membrane as a helical segment. A 1,2-diacyl-sn-glycero-3-phospho-(1D-myo-inositol-4,5-bisphosphate) is bound by residues R79 and R81. The Extracellular segment spans residues 105-129 (IAVAHGDLEPAEAHGRTPCVLQVHG). Residues C123 and C155 are joined by a disulfide bond. The segment at residues 130–146 (FMAAFLFSIETQTTIGY) is an intramembrane region (helical; Pore-forming). K(+) is bound by residues T143, I144, G145, and Y146. The short motif at 143 to 148 (TIGYGL) is the Selectivity filter element. Residues 147 to 155 (GLRCVTEEC) are Extracellular-facing. The chain crosses the membrane as a helical span at residues 156 to 183 (PVAVFMVVAQSIVGCIIDSFMIGAIMAK). 2 residues coordinate a 1,2-diacyl-sn-glycero-3-phospho-(1D-myo-inositol-4,5-bisphosphate): K183 and K188. The Cytoplasmic portion of the chain corresponds to 184 to 427 (MARPKKRAQT…QRPYRRESEI (244 aa)). The segment covering 387-396 (DEEDEVDGEQ) has biased composition (acidic residues). The interval 387–427 (DEEDEVDGEQDSLGPQARRDFDRPQAGTALEQRPYRRESEI) is disordered. Positions 425 to 427 (SEI) match the PDZ-binding motif.

This sequence belongs to the inward rectifier-type potassium channel (TC 1.A.2.1) family. KCNJ12 subfamily. In terms of assembly, homotetramer. Forms heteromer with KCNJ4. Association, via its PDZ-recognition domain, with LIN7A, LIN7B, LIN7C, DLG1, CASK and APBA1 plays a key role in its localization and trafficking.

The protein localises to the membrane. It carries out the reaction K(+)(in) = K(+)(out). Activated by phosphatidylinositol 4,5-biphosphate (PtdIns(4,5)P2). PtdIns(4,5)P2 binding to the cytoplasmic side of the channel triggers a conformation change leading to channel opening. Inward rectifying potassium channel that probably participates in controlling the resting membrane potential in electrically excitable cells. Probably participates in establishing action potential waveform and excitability of neuronal and muscle tissues. Inward rectifier potassium channels are characterized by a greater tendency to allow potassium to flow into the cell rather than out of it. Their voltage dependence is regulated by the concentration of extracellular potassium; as external potassium is raised, the voltage range of the channel opening shifts to more positive voltages. The inward rectification is mainly due to the blockage of outward current by internal magnesium. This Bos taurus (Bovine) protein is ATP-sensitive inward rectifier potassium channel 12 (KCNJ12).